The following is a 1265-amino-acid chain: Guanine nucleotide exchange factor SDC25 (1265 aa).

In terms of domain architecture, SH3 spans 26–97 (QPIDVVECTY…PPSFTRSILN (72 aa)). Disordered regions lie at residues 409–454 (IPAS…DTIW) and 623–648 (LNLDNAKDKKNGSQNTDIQEEEDEYE). Residues 416 to 428 (TSCSSETSHHSPS) are compositionally biased toward low complexity. One can recognise an N-terminal Ras-GEF domain in the interval 782–914 (SNNRIKGGSK…LLKEVNQKFK (133 aa)). In terms of domain architecture, Ras-GEF spans 952 to 1199 (DPVLFATQLT…YQLSLIIEPK (248 aa)). Positions 1201-1252 (RKKVVPNSNSNNKSQEKSRDDQTDEGKTSTKKDRFSKFQLHKTKKKAPKVSK) are disordered. The span at 1214–1236 (SQEKSRDDQTDEGKTSTKKDRFS) shows a compositional bias: basic and acidic residues. Residues 1239–1252 (QLHKTKKKAPKVSK) are compositionally biased toward basic residues.

Functionally, promotes the exchange of Ras-bound GDP by GTP. The protein is Guanine nucleotide exchange factor SDC25 (SDC25) of Saccharomyces cerevisiae (strain AWRI1631) (Baker's yeast).